The primary structure comprises 912 residues: E3 ubiquitin-protein ligase HACE1 (912 aa).

7 ANK repeats span residues 23–55, 64–93, 97–126, 130–159, 163–192, 196–226, and 228–253; these read LPEDNETAVYTLMPMVMADQHRSVLELLSNSKF, VKRSLLHIAANCGSVECLVLLLKRGADPNY, SGCTPLHLAARNGQKKCMSKLLEYNADVNI, EGLTAIHWLAVNGRTELLHDLVQHVTNVDV, MGQTALHVACQNGHKTTVLCLLDSGADINR, SGATPLYFACSHGQRDTAQILLLRGAKYLPD, and NGVTPLDLCVQGGYGETCDILIQHHP. The HECT domain maps to 577–912; that stretch reads NCEKLKQGIA…HCGSYGYTMA (336 aa). Residue cysteine 879 is the Glycyl thioester intermediate of the active site.

The protein resides in the golgi apparatus. The protein localises to the golgi stack membrane. It localises to the cytoplasm. Its subcellular location is the endoplasmic reticulum. It carries out the reaction S-ubiquitinyl-[E2 ubiquitin-conjugating enzyme]-L-cysteine + [acceptor protein]-L-lysine = [E2 ubiquitin-conjugating enzyme]-L-cysteine + N(6)-ubiquitinyl-[acceptor protein]-L-lysine.. It functions in the pathway protein modification; protein ubiquitination. E3 ubiquitin-protein ligase involved in Golgi membrane fusion and regulation of small GTPases. Acts as a regulator of Golgi membrane dynamics during the cell cycle: recruited to Golgi membrane by Rab proteins and regulates postmitotic Golgi membrane fusion. Acts by mediating ubiquitination during mitotic Golgi disassembly, ubiquitination serving as a signal for Golgi reassembly later, after cell division. This Xenopus tropicalis (Western clawed frog) protein is E3 ubiquitin-protein ligase HACE1 (hace1).